The chain runs to 210 residues: Large ribosomal subunit protein uL3 (210 aa).

The disordered stretch occupies residues 133–156 (ASHGNSLSHRVPGSIGQNQTPGKV). An N5-methylglutamine modification is found at Q151.

It belongs to the universal ribosomal protein uL3 family. In terms of assembly, part of the 50S ribosomal subunit. Forms a cluster with proteins L14 and L19. In terms of processing, methylated by PrmB.

Its function is as follows. One of the primary rRNA binding proteins, it binds directly near the 3'-end of the 23S rRNA, where it nucleates assembly of the 50S subunit. The polypeptide is Large ribosomal subunit protein uL3 (Hamiltonella defensa subsp. Acyrthosiphon pisum (strain 5AT)).